The chain runs to 786 residues: Endonuclease MutS2 (786 aa).

335 to 342 contacts ATP; that stretch reads GPNTGGKT. Residues 529–549 form a disordered region; that stretch reads SQKNAERERKEAEEHRKQSEK. Residues 711–786 enclose the Smr domain; sequence LDLRGERYED…GLGVTVVELK (76 aa).

The protein belongs to the DNA mismatch repair MutS family. MutS2 subfamily. As to quaternary structure, homodimer. Binds to stalled ribosomes, contacting rRNA.

Functionally, endonuclease that is involved in the suppression of homologous recombination and thus may have a key role in the control of bacterial genetic diversity. Its function is as follows. Acts as a ribosome collision sensor, splitting the ribosome into its 2 subunits. Detects stalled/collided 70S ribosomes which it binds and splits by an ATP-hydrolysis driven conformational change. Acts upstream of the ribosome quality control system (RQC), a ribosome-associated complex that mediates the extraction of incompletely synthesized nascent chains from stalled ribosomes and their subsequent degradation. Probably generates substrates for RQC. The sequence is that of Endonuclease MutS2 from Bacillus mycoides (strain KBAB4) (Bacillus weihenstephanensis).